Consider the following 128-residue polypeptide: MRHRKSGRHLSRTSSHRKAMFQNMAVSLFEHELIKTTLPKAKELRRVAEPLITLAKEDSVANRRLAFDRTRSKEIVGKLFNDLGKRYATRQGGYLRILKCGFRTGDNAPMAYVELVDRPVGGSVEAAE.

The protein belongs to the bacterial ribosomal protein bL17 family. In terms of assembly, part of the 50S ribosomal subunit. Contacts protein L32.

The polypeptide is Large ribosomal subunit protein bL17 (Pseudomonas syringae pv. tomato (strain ATCC BAA-871 / DC3000)).